We begin with the raw amino-acid sequence, 197 residues long: ATP synthase subunit delta (197 aa).

The protein belongs to the ATPase delta chain family. F-type ATPases have 2 components, F(1) - the catalytic core - and F(0) - the membrane proton channel. F(1) has five subunits: alpha(3), beta(3), gamma(1), delta(1), epsilon(1). F(0) has three main subunits: a(1), b(2) and c(10-14). The alpha and beta chains form an alternating ring which encloses part of the gamma chain. F(1) is attached to F(0) by a central stalk formed by the gamma and epsilon chains, while a peripheral stalk is formed by the delta and b chains.

It localises to the cell inner membrane. Functionally, f(1)F(0) ATP synthase produces ATP from ADP in the presence of a proton or sodium gradient. F-type ATPases consist of two structural domains, F(1) containing the extramembraneous catalytic core and F(0) containing the membrane proton channel, linked together by a central stalk and a peripheral stalk. During catalysis, ATP synthesis in the catalytic domain of F(1) is coupled via a rotary mechanism of the central stalk subunits to proton translocation. In terms of biological role, this protein is part of the stalk that links CF(0) to CF(1). It either transmits conformational changes from CF(0) to CF(1) or is implicated in proton conduction. The chain is ATP synthase subunit delta from Bartonella henselae (strain ATCC 49882 / DSM 28221 / CCUG 30454 / Houston 1) (Rochalimaea henselae).